The sequence spans 460 residues: Glycogen synthase (460 aa).

Position 15 (K15) interacts with ADP-alpha-D-glucose.

It belongs to the glycosyltransferase 1 family. Bacterial/plant glycogen synthase subfamily.

The enzyme catalyses [(1-&gt;4)-alpha-D-glucosyl](n) + ADP-alpha-D-glucose = [(1-&gt;4)-alpha-D-glucosyl](n+1) + ADP + H(+). It functions in the pathway glycan biosynthesis; glycogen biosynthesis. Synthesizes alpha-1,4-glucan chains using ADP-glucose. This is Glycogen synthase from Trichodesmium erythraeum (strain IMS101).